A 238-amino-acid chain; its full sequence is uncharacterized protein (238 aa).

A run of 6 helical transmembrane segments spans residues Ile-24–Asn-44, Gly-78–Leu-98, Ile-109–Val-129, Phe-156–Ile-176, Met-188–Pro-208, and Ile-216–Leu-236.

It belongs to the TatC family.

The protein localises to the plastid. It is found in the chloroplast membrane. This is an uncharacterized protein from Gracilaria tenuistipitata var. liui (Red alga).